The chain runs to 559 residues: Alkaline phosphatase PhoK (559 aa).

An N-terminal signal peptide occupies residues 1–19; sequence MLKHVAAALLLATAMPVVA. Residues Asp-49 and Thr-89 each coordinate Zn(2+). The active-site Phosphothreonine intermediate is the Thr-89. Cys-90 and Cys-126 are disulfide-bonded. Residues Asn-110 and 171 to 173 contribute to the substrate site; that span reads KDR. Cys-231 and Cys-314 form a disulfide bridge. Zn(2+) is bound by residues Asp-300, His-304, Asp-345, His-346, and His-491. An intrachain disulfide couples Cys-545 to Cys-556.

Monomer. Zn(2+) serves as cofactor.

It localises to the secreted. The enzyme catalyses a phosphate monoester + H2O = an alcohol + phosphate. Functionally, alkaline phosphatase with broad substrate specificity. Precipitates uranium from alkaline solutions. The chain is Alkaline phosphatase PhoK from Sphingomonas sp.